The chain runs to 118 residues: Large ribosomal subunit protein bL20 (118 aa).

This sequence belongs to the bacterial ribosomal protein bL20 family.

In terms of biological role, binds directly to 23S ribosomal RNA and is necessary for the in vitro assembly process of the 50S ribosomal subunit. It is not involved in the protein synthesizing functions of that subunit. The protein is Large ribosomal subunit protein bL20 of Thermus thermophilus (strain ATCC BAA-163 / DSM 7039 / HB27).